Consider the following 191-residue polypeptide: UPF0149 protein VCM66_2399 (191 aa).

Belongs to the UPF0149 family.

The protein is UPF0149 protein VCM66_2399 of Vibrio cholerae serotype O1 (strain M66-2).